Reading from the N-terminus, the 261-residue chain is 5'-nucleotidase SurE (261 aa).

4 residues coordinate a divalent metal cation: Asp10, Asp11, Ser41, and Asn96.

It belongs to the SurE nucleotidase family. A divalent metal cation is required as a cofactor.

It localises to the cytoplasm. The catalysed reaction is a ribonucleoside 5'-phosphate + H2O = a ribonucleoside + phosphate. Its function is as follows. Nucleotidase that shows phosphatase activity on nucleoside 5'-monophosphates. This is 5'-nucleotidase SurE from Methanococcoides burtonii (strain DSM 6242 / NBRC 107633 / OCM 468 / ACE-M).